The sequence spans 97 residues: Gene 45 protein (97 aa).

The chain is Gene 45 protein (45) from Mycobacterium (Mycobacteriophage L5).